The primary structure comprises 865 residues: MSMNSAQIRDAFLNYFAERGHEKVPSASMIPGNDPTLLFTNAGMVPFKDVFLGTDKRRYDKATSAQRCLRAGGKHNDLENVGYTARHHTFFEMMGNFSFGDYFKKQAIQYAWDFLTKELKLPAEKLWVTVFTEDDEAYDIWVKDIGVPEDRISRIGEKDNFWSMGDTGPCGPCSEVFYDHGEEVWGGPPGTPEEDGDRYIEIWNLVFMQYNRQADGTLEPLPDPSIDTGMGLERISAIMQNVHSNYEIDLFQALIKAAAEIIGTNDLDNKSLRVIADHIRSCSFLITDGVMPSNEGRGYVLRRIIRRAVRHGHLLGAKDTFFFRLVDELARQMGEAYPELEQKKQIIKDALEREEQQFARTLERGLAILSDEIGELKGNVIPGDVVFKLYDTYGFPVDLTADIAREQELTIDEQGFEQAMSEQRQRAQQASQFGMDYNQQLKSDNKTAFTGYDDVVGQAKVVELFKDGKPVEQLQAGENGIVVLSETPFYAESGGQIGDKGVLVANGPAFEVTDTQYIGKAIAHHGVAKAAVKLSDSVKAEIDSERRENIKRNHSATHLLHAALRNLLGEHVTQKGSLVEADKMRFDFSHFEPVTTEQLAQLEREVNAQVRANLPLQTQLMAIDEAKEAGAMALFGEKYDEQVRVVRMGDFSMELCGGTHVKATGDIGLFRITSEGGIASGVRRIEVVTGEAAVRYTQQQQSVLQQIAGELKTEPSSVAEKVQQLQHKFRELERKNEQLQQKLAQQAGGGLIAQAVDINGVKAIIAELDQADPKSLRGLVDDLKNQMGSGIVLLGTANGDKVSLIAGVTTDLTSKVKAGDIVNQAANVVGGKGGGRPDMAQAGGSLPEQLNEALATATTWLQQQL.

Zn(2+) is bound by residues histidine 554, histidine 558, cysteine 656, and histidine 660.

The protein belongs to the class-II aminoacyl-tRNA synthetase family. Requires Zn(2+) as cofactor.

Its subcellular location is the cytoplasm. It catalyses the reaction tRNA(Ala) + L-alanine + ATP = L-alanyl-tRNA(Ala) + AMP + diphosphate. In terms of biological role, catalyzes the attachment of alanine to tRNA(Ala) in a two-step reaction: alanine is first activated by ATP to form Ala-AMP and then transferred to the acceptor end of tRNA(Ala). Also edits incorrectly charged Ser-tRNA(Ala) and Gly-tRNA(Ala) via its editing domain. This chain is Alanine--tRNA ligase, found in Idiomarina loihiensis (strain ATCC BAA-735 / DSM 15497 / L2-TR).